Reading from the N-terminus, the 290-residue chain is Protein SSO1 (290 aa).

Residues 1–265 (MSYNNPYQLE…ARKARKNKIR (265 aa)) are Cytoplasmic-facing. The t-SNARE coiled-coil homology domain maps to 190–252 (LAEVQARHQE…EQGVGHTDKA (63 aa)). Residues 266-287 (CWLIVFAIIVVVVVVVVVPAVV) form a helical; Anchor for type IV membrane protein membrane-spanning segment. Topologically, residues 288–290 (KTR) are extracellular.

This sequence belongs to the syntaxin family.

The protein resides in the membrane. Its function is as follows. Required for vesicle fusion with the plasma membrane. The protein is Protein SSO1 (SSO1) of Saccharomyces cerevisiae (strain ATCC 204508 / S288c) (Baker's yeast).